The primary structure comprises 465 residues: 5'-adenylylsulfate reductase 1, chloroplastic (465 aa).

Residues 1-53 (MAMSVNVSSSSSSGIINSRFGVSLEPKVSQIGSLRLLDRVHVAPVSLNLSGKR) constitute a chloroplast transit peptide. Residues 73-327 (LAATMVAEIA…KAKECGLHKG (255 aa)) are reductase domain. In terms of domain architecture, Thioredoxin spans 344 to 465 (SAVADIFKSE…SLTSFLNLVR (122 aa)). Active-site nucleophile residues include C385 and C388. C385 and C388 are oxidised to a cystine.

The protein belongs to the APS reductase family. [4Fe-4S] cluster serves as cofactor. As to expression, leaves, roots and stem.

It is found in the plastid. The protein localises to the chloroplast. The enzyme catalyses glutathione disulfide + sulfite + AMP + 2 H(+) = adenosine 5'-phosphosulfate + 2 glutathione. Stimulated by sodium sulfate &gt; ammonium sulfate and is sensitive to inactivation by 5'AMP. Its function is as follows. Reduces sulfate for Cys biosynthesis. Substrate preference is adenosine-5'-phosphosulfate (APS) &gt;&gt; 3'-phosphoadenosine-5'-phosphosulfate (PAPS). Uses glutathione or DTT as source of protons. The sequence is that of 5'-adenylylsulfate reductase 1, chloroplastic (APR1) from Arabidopsis thaliana (Mouse-ear cress).